Here is an 804-residue protein sequence, read N- to C-terminus: Ribonucleoside-diphosphate reductase large subunit (804 aa).

The ATP-cone domain occupies Met1–Asp92. ATP is bound by residues Asn5–Arg6, Glu11–Gln17, Thr53, and Asp57. Ser216 contributes to the GDP binding site. Cys217 and Cys442 form a disulfide bridge. DTTP-binding positions include Asp225–Ile227, Lys242, Arg255, and Arg262–Gly263. Asn425 is a GDP binding site. Asn425 acts as the Proton acceptor in catalysis. Catalysis depends on Cys427, which acts as the Cysteine radical intermediate. GDP contacts are provided by residues Glu429 and Thr603–Thr606. Glu429 acts as the Proton acceptor in catalysis.

It belongs to the ribonucleoside diphosphate reductase large chain family. As to quaternary structure, heterodimer of a large and a small subunit.

It carries out the reaction a 2'-deoxyribonucleoside 5'-diphosphate + [thioredoxin]-disulfide + H2O = a ribonucleoside 5'-diphosphate + [thioredoxin]-dithiol. Under complex allosteric control mediated by deoxynucleoside triphosphates and ATP binding to separate specificity and activation sites on the large subunit. The type of nucleotide bound at the specificity site determines substrate preference. It seems probable that ATP makes the enzyme reduce CDP and UDP, dGTP favors ADP reduction and dTTP favors GDP reduction. Stimulated by ATP and inhibited by dATP binding to the activity site. Provides the precursors necessary for DNA synthesis. Catalyzes the biosynthesis of deoxyribonucleotides from the corresponding ribonucleotides. The sequence is that of Ribonucleoside-diphosphate reductase large subunit (RNR1) from Plasmodium falciparum (isolate FCR-3 / Gambia).